Reading from the N-terminus, the 125-residue chain is Desulfoferrodoxin homolog (125 aa).

Fe cation-binding residues include C10, C13, C29, C30, H49, H69, H75, C116, and H119.

It belongs to the desulfoferrodoxin family. Fe(3+) serves as cofactor. Cu(2+) is required as a cofactor.

The sequence is that of Desulfoferrodoxin homolog from Archaeoglobus fulgidus (strain ATCC 49558 / DSM 4304 / JCM 9628 / NBRC 100126 / VC-16).